Consider the following 330-residue polypeptide: Mycothiol acetyltransferase (330 aa).

2 N-acetyltransferase domains span residues 5-142 (LVTD…MPLR) and 171-328 (VRLR…APRP). Glutamate 36 is a binding site for 1D-myo-inositol 2-(L-cysteinylamino)-2-deoxy-alpha-D-glucopyranoside. 80–82 (VVV) contributes to the acetyl-CoA binding site. Positions 142-161 (RDIAGDEPGGPWEAPELPEP) are disordered. 3 residues coordinate 1D-myo-inositol 2-(L-cysteinylamino)-2-deoxy-alpha-D-glucopyranoside: glutamate 198, lysine 238, and glutamate 254. Residues 258 to 260 (VGV) and 265 to 271 (QGSGLGR) each bind acetyl-CoA. Tyrosine 292 provides a ligand contact to 1D-myo-inositol 2-(L-cysteinylamino)-2-deoxy-alpha-D-glucopyranoside. Acetyl-CoA is bound at residue 297–302 (NEAAVR).

This sequence belongs to the acetyltransferase family. MshD subfamily. In terms of assembly, monomer.

The catalysed reaction is 1D-myo-inositol 2-(L-cysteinylamino)-2-deoxy-alpha-D-glucopyranoside + acetyl-CoA = mycothiol + CoA + H(+). Functionally, catalyzes the transfer of acetyl from acetyl-CoA to desacetylmycothiol (Cys-GlcN-Ins) to form mycothiol. In Nocardiopsis dassonvillei (strain ATCC 23218 / DSM 43111 / CIP 107115 / JCM 7437 / KCTC 9190 / NBRC 14626 / NCTC 10488 / NRRL B-5397 / IMRU 509) (Actinomadura dassonvillei), this protein is Mycothiol acetyltransferase.